Consider the following 68-residue polypeptide: uncharacterized protein (68 aa).

This is an uncharacterized protein from Dryophytes versicolor (chameleon treefrog).